A 359-amino-acid polypeptide reads, in one-letter code: Dihydroorotate dehydrogenase (quinone) (359 aa).

FMN contacts are provided by residues 61–65 (AGYDK) and Thr-85. Residue Lys-65 coordinates substrate. 110–114 (NRLGF) serves as a coordination point for substrate. Residues Asn-139 and Asn-170 each contribute to the FMN site. A substrate-binding site is contributed by Asn-170. The active-site Nucleophile is Ser-173. Position 175 (Asn-175) interacts with substrate. Positions 211 and 239 each coordinate FMN. A substrate-binding site is contributed by 240 to 241 (NT). FMN-binding positions include Gly-262, Gly-291, and 312–313 (YT).

The protein belongs to the dihydroorotate dehydrogenase family. Type 2 subfamily. Monomer. FMN serves as cofactor.

It is found in the cell membrane. The enzyme catalyses (S)-dihydroorotate + a quinone = orotate + a quinol. It participates in pyrimidine metabolism; UMP biosynthesis via de novo pathway; orotate from (S)-dihydroorotate (quinone route): step 1/1. Its function is as follows. Catalyzes the conversion of dihydroorotate to orotate with quinone as electron acceptor. The protein is Dihydroorotate dehydrogenase (quinone) of Mesorhizobium japonicum (strain LMG 29417 / CECT 9101 / MAFF 303099) (Mesorhizobium loti (strain MAFF 303099)).